Reading from the N-terminus, the 718-residue chain is Neutral ceramidase B (718 aa).

The first 20 residues, 1–20 (MINSFKKLIILISLVIILLS), serve as a signal peptide directing secretion. Asparagine 224 and asparagine 252 each carry an N-linked (GlcNAc...) asparagine glycan. The active-site Nucleophile is the serine 298. Asparagine 358, asparagine 378, asparagine 391, asparagine 421, asparagine 422, asparagine 577, asparagine 610, and asparagine 614 each carry an N-linked (GlcNAc...) asparagine glycan.

Belongs to the neutral ceramidase family.

Its subcellular location is the secreted. It catalyses the reaction an N-acylsphing-4-enine + H2O = sphing-4-enine + a fatty acid. Its function is as follows. Hydrolyzes the sphingolipid ceramide into sphingosine and free fatty acid. This Dictyostelium discoideum (Social amoeba) protein is Neutral ceramidase B (dcd2B).